The sequence spans 362 residues: Probable branched-chain-amino-acid aminotransferase (362 aa).

The residue at position 202 (Lys202) is an N6-(pyridoxal phosphate)lysine.

The protein belongs to the class-IV pyridoxal-phosphate-dependent aminotransferase family. Requires pyridoxal 5'-phosphate as cofactor.

It catalyses the reaction L-leucine + 2-oxoglutarate = 4-methyl-2-oxopentanoate + L-glutamate. It carries out the reaction L-isoleucine + 2-oxoglutarate = (S)-3-methyl-2-oxopentanoate + L-glutamate. The enzyme catalyses L-valine + 2-oxoglutarate = 3-methyl-2-oxobutanoate + L-glutamate. It functions in the pathway amino-acid biosynthesis; L-isoleucine biosynthesis; L-isoleucine from 2-oxobutanoate: step 4/4. Its pathway is amino-acid biosynthesis; L-leucine biosynthesis; L-leucine from 3-methyl-2-oxobutanoate: step 4/4. It participates in amino-acid biosynthesis; L-valine biosynthesis; L-valine from pyruvate: step 4/4. Acts on leucine, isoleucine and valine. The chain is Probable branched-chain-amino-acid aminotransferase (ilvE) from Streptomyces coelicolor (strain ATCC BAA-471 / A3(2) / M145).